A 1322-amino-acid polypeptide reads, in one-letter code: Protein fantom (1322 aa).

The signal sequence occupies residues 1 to 22 (MVSARYPIEKWSRPQLEDHFHN). Positions 15–89 (QLEDHFHNVV…MKLKAAKQQL (75 aa)) form a coiled coil. Positions 108 to 119 (RSTFRQPPSTFR) are enriched in polar residues. Disordered regions lie at residues 108 to 151 (RSTF…GEKL), 189 to 275 (KSSV…PDQT), and 392 to 418 (RIEEEKISHSPPPMTFEPIRKRHSQSE). Residues 195 to 217 (SSPPTRLSTSSSSKSSSSNNNND) show a composition bias toward low complexity. The segment covering 224–234 (ELEEMSEMSDD) has biased composition (acidic residues). The stretch at 274-362 (QTEKVLLDKL…EDQKKFEAMR (89 aa)) forms a coiled coil. A coiled-coil region spans residues 456–538 (ASENSLARWQ…FMLEEQIRTI (83 aa)). 2 disordered regions span residues 891 to 1094 (AELH…KPRN) and 1121 to 1149 (TDPLHFSVPPSESSSTSSPRRAEKAPVPL). Over residues 918 to 927 (TDSSDTSFSH) the composition is skewed to low complexity. The segment covering 956–975 (SDGEEEADRIVFDDDDDEIE) has biased composition (acidic residues). A compositionally biased stretch (basic and acidic residues) spans 984 to 996 (RDPEPLEVPERQV). The segment covering 1015 to 1029 (NGTNESKESTPVTQR) has biased composition (polar residues). Positions 1042–1067 (PELEPESGPEPEPVVESEPNEVAETE) are enriched in acidic residues. The span at 1068-1080 (EDRKRELKTEELK) shows a compositional bias: basic and acidic residues. The span at 1127–1139 (SVPPSESSSTSSP) shows a compositional bias: low complexity.

It belongs to the RPGRIP1 family. As to expression, expressed at the transition zone at the base of cilia. Expressed in ciliated sensory neurons, including the amphid neurons in the head.

Its subcellular location is the cell projection. It localises to the cilium. Functionally, thought to have an important role in cilia formation and cilia-mediated chemosensation. Involved in the docking of other MKS/MKSR proteins localized to the transition zone of the cilia. This is Protein fantom (mks-5) from Caenorhabditis elegans.